A 353-amino-acid polypeptide reads, in one-letter code: Elongation factor Ts (353 aa).

The interval 80–83 is involved in Mg(2+) ion dislocation from EF-Tu; it reads TDFV.

This sequence belongs to the EF-Ts family.

Its subcellular location is the cytoplasm. Its function is as follows. Associates with the EF-Tu.GDP complex and induces the exchange of GDP to GTP. It remains bound to the aminoacyl-tRNA.EF-Tu.GTP complex up to the GTP hydrolysis stage on the ribosome. This chain is Elongation factor Ts, found in Sulfurovum sp. (strain NBC37-1).